The primary structure comprises 326 residues: Biotin synthase (326 aa).

The 230-residue stretch at 50–279 folds into the Radical SAM core domain; sequence FNGEKVDVEQ…ESVIKISGGR (230 aa). [4Fe-4S] cluster is bound by residues Cys-68, Cys-72, and Cys-75. The [2Fe-2S] cluster site is built by Cys-112, Cys-145, Cys-204, and Lys-274.

The protein belongs to the radical SAM superfamily. Biotin synthase family. Homodimer. [4Fe-4S] cluster serves as cofactor. Requires [2Fe-2S] cluster as cofactor.

The catalysed reaction is (4R,5S)-dethiobiotin + (sulfur carrier)-SH + 2 reduced [2Fe-2S]-[ferredoxin] + 2 S-adenosyl-L-methionine = (sulfur carrier)-H + biotin + 2 5'-deoxyadenosine + 2 L-methionine + 2 oxidized [2Fe-2S]-[ferredoxin]. The protein operates within cofactor biosynthesis; biotin biosynthesis; biotin from 7,8-diaminononanoate: step 2/2. Catalyzes the conversion of dethiobiotin (DTB) to biotin by the insertion of a sulfur atom into dethiobiotin via a radical-based mechanism. In Nitrosopumilus maritimus (strain SCM1), this protein is Biotin synthase.